An 860-amino-acid chain; its full sequence is Leucine--tRNA ligase (860 aa).

A 'HIGH' region motif is present at residues 42 to 52 (PYPSGRLHMGH). Residues 619 to 623 (KMSKS) carry the 'KMSKS' region motif. Lys-622 provides a ligand contact to ATP.

It belongs to the class-I aminoacyl-tRNA synthetase family.

Its subcellular location is the cytoplasm. It carries out the reaction tRNA(Leu) + L-leucine + ATP = L-leucyl-tRNA(Leu) + AMP + diphosphate. In Salmonella enteritidis PT4 (strain P125109), this protein is Leucine--tRNA ligase.